Here is a 167-residue protein sequence, read N- to C-terminus: 2-C-methyl-D-erythritol 2,4-cyclodiphosphate synthase (167 aa).

A divalent metal cation contacts are provided by Asp15 and His17. 4-CDP-2-C-methyl-D-erythritol 2-phosphate contacts are provided by residues 15–17 (DIH) and 43–44 (HS). Residue His51 coordinates a divalent metal cation. 4-CDP-2-C-methyl-D-erythritol 2-phosphate contacts are provided by residues 65–67 (DIG), 141–144 (TTNE), and Arg151.

The protein belongs to the IspF family. Homotrimer. A divalent metal cation is required as a cofactor.

The catalysed reaction is 4-CDP-2-C-methyl-D-erythritol 2-phosphate = 2-C-methyl-D-erythritol 2,4-cyclic diphosphate + CMP. It participates in isoprenoid biosynthesis; isopentenyl diphosphate biosynthesis via DXP pathway; isopentenyl diphosphate from 1-deoxy-D-xylulose 5-phosphate: step 4/6. Functionally, involved in the biosynthesis of isopentenyl diphosphate (IPP) and dimethylallyl diphosphate (DMAPP), two major building blocks of isoprenoid compounds. Catalyzes the conversion of 4-diphosphocytidyl-2-C-methyl-D-erythritol 2-phosphate (CDP-ME2P) to 2-C-methyl-D-erythritol 2,4-cyclodiphosphate (ME-CPP) with a corresponding release of cytidine 5-monophosphate (CMP). The chain is 2-C-methyl-D-erythritol 2,4-cyclodiphosphate synthase from Prochlorococcus marinus (strain MIT 9312).